Reading from the N-terminus, the 461-residue chain is Cysteine--tRNA ligase (461 aa).

C28 is a binding site for Zn(2+). The short motif at 30 to 40 (VTIYDLCHIGH) is the 'HIGH' region element. The Zn(2+) site is built by C211, H236, and E240. The 'KMSKS' region signature appears at 268 to 272 (KMSKS). ATP is bound at residue K271.

Belongs to the class-I aminoacyl-tRNA synthetase family. Monomer. Requires Zn(2+) as cofactor.

The protein localises to the cytoplasm. It catalyses the reaction tRNA(Cys) + L-cysteine + ATP = L-cysteinyl-tRNA(Cys) + AMP + diphosphate. The chain is Cysteine--tRNA ligase from Aliivibrio fischeri (strain ATCC 700601 / ES114) (Vibrio fischeri).